A 299-amino-acid polypeptide reads, in one-letter code: Methionine aminopeptidase (299 aa).

His64 contacts substrate. Asp84, Asp95, and His158 together coordinate a divalent metal cation. His166 lines the substrate pocket. Positions 191 and 284 each coordinate a divalent metal cation.

Belongs to the peptidase M24A family. Methionine aminopeptidase archaeal type 2 subfamily. Monomer. Co(2+) is required as a cofactor. Zn(2+) serves as cofactor. The cofactor is Mn(2+). It depends on Fe(2+) as a cofactor.

It carries out the reaction Release of N-terminal amino acids, preferentially methionine, from peptides and arylamides.. Its function is as follows. Removes the N-terminal methionine from nascent proteins. The N-terminal methionine is often cleaved when the second residue in the primary sequence is small and uncharged (Met-Ala-, Cys, Gly, Pro, Ser, Thr, or Val). This chain is Methionine aminopeptidase, found in Methanothermobacter thermautotrophicus (strain ATCC 29096 / DSM 1053 / JCM 10044 / NBRC 100330 / Delta H) (Methanobacterium thermoautotrophicum).